The chain runs to 273 residues: Shikimate dehydrogenase (NADP(+)) (273 aa).

Shikimate contacts are provided by residues 15-17 (SQS) and Thr-62. Lys-66 (proton acceptor) is an active-site residue. Glu-78 contributes to the NADP(+) binding site. Shikimate contacts are provided by Asn-87 and Asp-102. NADP(+)-binding positions include 127–131 (GAGGA), 151–156 (NRTVTK), and Met-215. Tyr-217 provides a ligand contact to shikimate. Gly-239 is an NADP(+) binding site.

The protein belongs to the shikimate dehydrogenase family. Homodimer.

It carries out the reaction shikimate + NADP(+) = 3-dehydroshikimate + NADPH + H(+). The protein operates within metabolic intermediate biosynthesis; chorismate biosynthesis; chorismate from D-erythrose 4-phosphate and phosphoenolpyruvate: step 4/7. Functionally, involved in the biosynthesis of the chorismate, which leads to the biosynthesis of aromatic amino acids. Catalyzes the reversible NADPH linked reduction of 3-dehydroshikimate (DHSA) to yield shikimate (SA). This Laribacter hongkongensis (strain HLHK9) protein is Shikimate dehydrogenase (NADP(+)).